Here is a 329-residue protein sequence, read N- to C-terminus: Deoxynucleotidyltransferase terminal-interacting protein 1 (329 aa).

2 disordered regions span residues 1–22 and 147–178; these read MGAT…GGLE and KRGR…ILSS. An important for dimerization region spans residues 56–147; it reads MTTSFTDPAI…RLTHELPGIK (92 aa). Basic and acidic residues predominate over residues 147–158; it reads KRGRQAEEECAH. The a.T hook DNA-binding region spans 159-173; that stretch reads RGSPLPKKRKGRPPG. The residue at position 161 (S161) is a Phosphoserine. Positions 164–170 match the Nuclear localization signal motif; that stretch reads PKKRKGR. The segment at 197 to 316 is important for DNA and nucleosome binding; that stretch reads REGPKWDPAR…MRKYMETLRT (120 aa). Positions 216–237 form a DNA-binding region, H-T-H motif; that stretch reads GSRANKALGMGGTRGRIYIKHP.

Monomer and homodimer. A minor proportion may form homotrimers. Interacts with ZNF541. Interacts with the terminal deoxynucleotidyltransferase DNTT. Interacts with TRERF1. Identified in a histone deacetylase complex that contains DNTTIP1, HDAC1 and MIDEAS; this complex assembles into a tetramer that contains four copies of each protein chain. Component of a histone deacetylase complex containing DNTTIP1, ZNF541, HDAC1 and HDAC2. Identified in a complex with KCTD19, HDAC1, HDAC2 and ZNF541.

It localises to the nucleus. Increases DNTT terminal deoxynucleotidyltransferase activity (in vitro). Also acts as a transcriptional regulator, binding to the consensus sequence 5'-GNTGCATG-3' following an AT-tract. Associates with RAB20 promoter and positively regulates its transcription. Binds DNA and nucleosomes; may recruit HDAC1 complexes to nucleosomes or naked DNA. In Pongo abelii (Sumatran orangutan), this protein is Deoxynucleotidyltransferase terminal-interacting protein 1 (DNTTIP1).